The chain runs to 173 residues: Dual-action ribosomal maturation protein DarP (173 aa).

This sequence belongs to the DarP family.

The protein localises to the cytoplasm. Functionally, member of a network of 50S ribosomal subunit biogenesis factors which assembles along the 30S-50S interface, preventing incorrect 23S rRNA structures from forming. Promotes peptidyl transferase center (PTC) maturation. The protein is Dual-action ribosomal maturation protein DarP of Pseudomonas putida (strain GB-1).